The primary structure comprises 163 residues: Nucleotide-binding protein YajQ (163 aa).

It belongs to the YajQ family.

Its function is as follows. Nucleotide-binding protein. The chain is Nucleotide-binding protein YajQ from Escherichia coli O127:H6 (strain E2348/69 / EPEC).